A 158-amino-acid chain; its full sequence is ATP synthase subunit delta, mitochondrial (158 aa).

A mitochondrion-targeting transit peptide spans 1 to 22 (MFRLTSARALFRVANVAARRTY).

This sequence belongs to the ATPase epsilon chain family. F-type ATPases have 2 components, CF(1) - the catalytic core - and CF(0) - the membrane proton channel. CF(1) has five subunits: alpha(3), beta(3), gamma(1), delta(1), epsilon(1). CF(0) has three main subunits: a, b and c.

It is found in the mitochondrion. It localises to the mitochondrion inner membrane. Its function is as follows. Mitochondrial membrane ATP synthase (F(1)F(0) ATP synthase or Complex V) produces ATP from ADP in the presence of a proton gradient across the membrane which is generated by electron transport complexes of the respiratory chain. F-type ATPases consist of two structural domains, F(1) - containing the extramembraneous catalytic core, and F(0) - containing the membrane proton channel, linked together by a central stalk and a peripheral stalk. During catalysis, ATP turnover in the catalytic domain of F(1) is coupled via a rotary mechanism of the central stalk subunits to proton translocation. Part of the complex F(1) domain and of the central stalk which is part of the complex rotary element. Rotation of the central stalk against the surrounding alpha(3)beta(3) subunits leads to hydrolysis of ATP in three separate catalytic sites on the beta subunits. This is ATP synthase subunit delta, mitochondrial (ATP16) from Eremothecium gossypii (strain ATCC 10895 / CBS 109.51 / FGSC 9923 / NRRL Y-1056) (Yeast).